The following is a 399-amino-acid chain: Chorismate synthase (399 aa).

Arginine 40 and arginine 46 together coordinate NADP(+). Residues 135–137 (RAS), 256–257 (QA), glycine 301, 316–320 (KPIAT), and arginine 342 each bind FMN.

It belongs to the chorismate synthase family. In terms of assembly, homotetramer. FMNH2 serves as cofactor.

It catalyses the reaction 5-O-(1-carboxyvinyl)-3-phosphoshikimate = chorismate + phosphate. Its pathway is metabolic intermediate biosynthesis; chorismate biosynthesis; chorismate from D-erythrose 4-phosphate and phosphoenolpyruvate: step 7/7. Functionally, catalyzes the anti-1,4-elimination of the C-3 phosphate and the C-6 proR hydrogen from 5-enolpyruvylshikimate-3-phosphate (EPSP) to yield chorismate, which is the branch point compound that serves as the starting substrate for the three terminal pathways of aromatic amino acid biosynthesis. This reaction introduces a second double bond into the aromatic ring system. This Paenarthrobacter aurescens (strain TC1) protein is Chorismate synthase.